The sequence spans 160 residues: SsrA-binding protein (160 aa).

Positions 1–23 (MARKKKQDKGQGPKTIAQNRRAR) are disordered.

The protein belongs to the SmpB family.

The protein localises to the cytoplasm. Required for rescue of stalled ribosomes mediated by trans-translation. Binds to transfer-messenger RNA (tmRNA), required for stable association of tmRNA with ribosomes. tmRNA and SmpB together mimic tRNA shape, replacing the anticodon stem-loop with SmpB. tmRNA is encoded by the ssrA gene; the 2 termini fold to resemble tRNA(Ala) and it encodes a 'tag peptide', a short internal open reading frame. During trans-translation Ala-aminoacylated tmRNA acts like a tRNA, entering the A-site of stalled ribosomes, displacing the stalled mRNA. The ribosome then switches to translate the ORF on the tmRNA; the nascent peptide is terminated with the 'tag peptide' encoded by the tmRNA and targeted for degradation. The ribosome is freed to recommence translation, which seems to be the essential function of trans-translation. This Thermobifida fusca (strain YX) protein is SsrA-binding protein.